Consider the following 80-residue polypeptide: Pigment-dispersing hormone type 2 (80 aa).

The signal sequence occupies residues 1–23 (MARCFVVLAFLALAAMSLQVATA). Ala77 is subject to Alanine amide.

It belongs to the arthropod PDH family. Eyestalk.

It is found in the secreted. In terms of biological role, the pigment-dispersing hormone causes the migration of the distal retinal pigment into the proximal end of the pigment chromatophore cells and thus decreases the amount of light entering the retinulas. May also function as a neurotransmitter and/or neuromodulator. This chain is Pigment-dispersing hormone type 2 (PDH2), found in Penaeus vannamei (Whiteleg shrimp).